Reading from the N-terminus, the 217-residue chain is MKFFVDTADVKDIRELNDLGLLDGVTTNPSLILKAGRDIVEVTKEICSIVEGPVSAEVTATEYSAMMKEAAALSKIADNICIKLPLTLDGLKACKALTSDGHQTNVTLCFSANQALLAAKAGATFVSPFIGRLDDIAVDGMDLIREIRHIYDNYGYETEILAASVRTVNHVKEAALIGADVVTAPPATLKALVKHPLTDKGLETFLADWAKTGQKIA.

Lys-83 acts as the Schiff-base intermediate with substrate in catalysis.

Belongs to the transaldolase family. Type 3B subfamily.

Its subcellular location is the cytoplasm. It catalyses the reaction D-sedoheptulose 7-phosphate + D-glyceraldehyde 3-phosphate = D-erythrose 4-phosphate + beta-D-fructose 6-phosphate. It functions in the pathway carbohydrate degradation; pentose phosphate pathway; D-glyceraldehyde 3-phosphate and beta-D-fructose 6-phosphate from D-ribose 5-phosphate and D-xylulose 5-phosphate (non-oxidative stage): step 2/3. Transaldolase is important for the balance of metabolites in the pentose-phosphate pathway. The polypeptide is Probable transaldolase (Sinorhizobium medicae (strain WSM419) (Ensifer medicae)).